The sequence spans 333 residues: UDP-N-acetylglucosamine 4,6-dehydratase (inverting) (333 aa).

NADP(+) contacts are provided by residues 19 to 22, 43 to 48, 67 to 68, Ala-87, Lys-91, and 129 to 130; these read TGSF, SRDELK, DV, and LS. Position 91 (Lys-91) interacts with substrate. Residue Lys-133 is part of the active site. Positions 141 and 145 each coordinate NADP(+). Position 173 (Asn-173) interacts with substrate. 174–178 lines the NADP(+) pocket; that stretch reads VVGSR. The substrate site is built by Val-181, Thr-199, Arg-258, and Glu-261.

The protein belongs to the polysaccharide synthase family. As to quaternary structure, homohexamer. The cofactor is NADP(+).

It catalyses the reaction UDP-N-acetyl-alpha-D-glucosamine = UDP-2-acetamido-2,6-dideoxy-beta-L-arabino-hex-4-ulose + H2O. In terms of biological role, catalyzes the first step in the biosynthesis of pseudaminic acid, a sialic-acid-like sugar that is used to modify flagellin. Has both C6 dehydratase and C5 epimerase activities that result in the production of both UDP-2-acetamido-2,6-dideoxy-beta-L-arabino-4-hexulose and UDP-2-acetamido-2,6-dideoxy-alpha-D-xylo-4-hexulose. This Helicobacter pylori (strain ATCC 700392 / 26695) (Campylobacter pylori) protein is UDP-N-acetylglucosamine 4,6-dehydratase (inverting) (pseB).